The sequence spans 382 residues: Pyrimidine monooxygenase RutA (382 aa).

Residues 68–69 (IK), asparagine 134, glutamate 143, 159–160 (RY), and serine 209 each bind FMN.

This sequence belongs to the NtaA/SnaA/DszA monooxygenase family. RutA subfamily.

It carries out the reaction uracil + FMNH2 + NADH + O2 = (Z)-3-ureidoacrylate + FMN + NAD(+) + H2O + H(+). The catalysed reaction is thymine + FMNH2 + NADH + O2 = (Z)-2-methylureidoacrylate + FMN + NAD(+) + H2O + H(+). Catalyzes the pyrimidine ring opening between N-3 and C-4 by an unusual flavin hydroperoxide-catalyzed mechanism, adding oxygen atoms in the process to yield ureidoacrylate peracid, that immediately reacts with FMN forming ureidoacrylate and FMN-N(5)-oxide. The FMN-N(5)-oxide reacts spontaneously with NADH to produce FMN. Requires the flavin reductase RutF to regenerate FMN in vivo. This is Pyrimidine monooxygenase RutA from Escherichia coli O150:H5 (strain SE15).